A 309-amino-acid polypeptide reads, in one-letter code: Serine/threonine-protein phosphatase 2A catalytic subunit alpha isoform (309 aa).

Mn(2+) contacts are provided by aspartate 57, histidine 59, aspartate 85, and asparagine 117. 3 residues coordinate Zn(2+): aspartate 57, histidine 59, and aspartate 85. Fe(3+) contacts are provided by aspartate 85 and asparagine 117. Histidine 118 functions as the Proton donor in the catalytic mechanism. 2 residues coordinate Mn(2+): histidine 167 and histidine 241. Fe(3+) contacts are provided by histidine 167 and histidine 241. Phosphotyrosine is present on tyrosine 307. At leucine 309 the chain carries Leucine methyl ester.

It belongs to the PPP phosphatase family. PP-1 subfamily. As to quaternary structure, PP2A consists of a common heterodimeric core enzyme, composed of PPP2CA, a 36 kDa catalytic subunit (subunit C), and PPP2R1A, a 65 kDa constant regulatory subunit (PR65 or subunit A), that associates with a variety of regulatory subunits. Proteins that associate with the core dimer include three families of regulatory subunits B (the R2/B/PR55/B55, R3/B''/PR72/PR130/PR59 and R5/B'/B56 families), the 48 kDa variable regulatory subunit, viral proteins, and cell signaling molecules. May indirectly interact with SGOL1, most probably through regulatory B56 subunits. Phosphatase component of the Integrator-PP2A (INTAC) complex, composed of the Integrator core complex and protein phosphatase 2A subunits PPP2CA and PPP2R1A. Requires Mn(2+) as cofactor. It depends on Fe(3+) as a cofactor. Zn(2+) is required as a cofactor. Post-translationally, reversibly methyl esterified on Leu-309 by leucine carboxyl methyltransferase 1 (LCMT1) and protein phosphatase methylesterase 1 (PPME1). Carboxyl methylation influences the affinity of the catalytic subunit for the different regulatory subunits, thereby modulating the PP2A holoenzyme's substrate specificity, enzyme activity and cellular localization. Phosphorylation of either threonine (by autophosphorylation-activated protein kinase) or tyrosine results in inactivation of the phosphatase. Auto-dephosphorylation has been suggested as a mechanism for reactivation.

It localises to the cytoplasm. The protein resides in the nucleus. The protein localises to the chromosome. Its subcellular location is the centromere. It is found in the cytoskeleton. It localises to the spindle pole. The catalysed reaction is O-phospho-L-seryl-[protein] + H2O = L-seryl-[protein] + phosphate. It carries out the reaction O-phospho-L-threonyl-[protein] + H2O = L-threonyl-[protein] + phosphate. Its activity is regulated as follows. Inhibited by the interaction between PPP2R2A and ARPP19; this inhibition is enhanced when ARPP19 is phosphorylated. Inhibited by the interaction between PPP2R2A and PABIR1/FAM122A. Functionally, PP2A is the major phosphatase for microtubule-associated proteins (MAPs). PP2A can modulate the activity of phosphorylase B kinase casein kinase 2, mitogen-stimulated S6 kinase, and MAP-2 kinase. Key mediator of a quality checkpoint during transcription elongation as part of the Integrator-PP2A (INTAC) complex. The INTAC complex drives premature transcription termination of transcripts that are unfavorably configured for transcriptional elongation: within the INTAC complex, PPP2CA catalyzes dephosphorylation of the C-terminal domain (CTD) of Pol II subunit POLR2A/RPB1 and SUPT5H/SPT5, thereby preventing transcriptional elongation. In Gallus gallus (Chicken), this protein is Serine/threonine-protein phosphatase 2A catalytic subunit alpha isoform (PPP2CA).